Consider the following 430-residue polypeptide: MANVVVVGAQWGDEGKGKIVDWLSEQADVVVRFQGGHNAGHTLVVGEAVYKLSLLPSGVVRPNTLGVIGNGVVLDPYALASEIDRLAGQGVTVSRENLRVADNATLILSLHRELDALREDGAPGTKIGTTKRGIGPAYEDKVGRRAIRLMDLAEPETLPPKIERLLAHHNALRRGFGLEEISEQTILDELTGIAERVLPYQDTVWRLLDDARRGGKRILFEGAQGALLDVDHGTYPFVTSSNTVAGQAATGSGLGPRAIGYVLGIAKAYTTRVGEGPFPTELHDEIGQRIGERGHEFGTVTGRKRRCGWFDACLVRQTVKTSGIDGIALTKLDVLDGFDEIRVCTAYDIDGQRFDHLPASQAAQQRAVPVYETIPGWSGTTAGARSWADLPAQAIKYVRRIEELIGAPVALLSTSPERDDTILMHNPFED.

Residues 12–18 (GDEGKGK) and 40–42 (GHT) contribute to the GTP site. The active-site Proton acceptor is Asp13. Positions 13 and 40 each coordinate Mg(2+). IMP is bound by residues 13 to 16 (DEGK), 38 to 41 (NAGH), Thr130, Arg144, Gln224, Thr239, and Arg303. Catalysis depends on His41, which acts as the Proton donor. 299 to 305 (TVTGRKR) serves as a coordination point for substrate. GTP contacts are provided by residues Arg305, 331–333 (KLD), and 413–415 (STS).

It belongs to the adenylosuccinate synthetase family. Homodimer. The cofactor is Mg(2+).

Its subcellular location is the cytoplasm. It catalyses the reaction IMP + L-aspartate + GTP = N(6)-(1,2-dicarboxyethyl)-AMP + GDP + phosphate + 2 H(+). The protein operates within purine metabolism; AMP biosynthesis via de novo pathway; AMP from IMP: step 1/2. Plays an important role in the de novo pathway of purine nucleotide biosynthesis. Catalyzes the first committed step in the biosynthesis of AMP from IMP. The sequence is that of Adenylosuccinate synthetase from Methylorubrum extorquens (strain CM4 / NCIMB 13688) (Methylobacterium extorquens).